The chain runs to 60 residues: MTTQQTVKIQLVRSPIGTKESHRATVRGLGLRKLNSVSELKDSPEVRGMINKISYLVKVL.

Belongs to the universal ribosomal protein uL30 family. As to quaternary structure, part of the 50S ribosomal subunit.

The sequence is that of Large ribosomal subunit protein uL30 from Paracidovorax citrulli (strain AAC00-1) (Acidovorax citrulli).